A 151-amino-acid chain; its full sequence is Ribosome maturation factor RimP (151 aa).

Belongs to the RimP family.

It localises to the cytoplasm. Functionally, required for maturation of 30S ribosomal subunits. The sequence is that of Ribosome maturation factor RimP from Crocosphaera subtropica (strain ATCC 51142 / BH68) (Cyanothece sp. (strain ATCC 51142)).